Reading from the N-terminus, the 512-residue chain is Peroxisomal N(1)-acetyl-spermine/spermidine oxidase (512 aa).

Met-1 is modified (N-acetylmethionine). Residues 1–6 (MQSGGR) constitute a propeptide that is removed on maturation. FAD contacts are provided by residues Ala-25, Glu-46, Arg-54, and 70 to 71 (HW). The substrate site is built by His-73 and Val-195. An FAD-binding site is contributed by Val-248. Asn-321 contacts substrate. Residues Glu-473 and 482–483 (TT) contribute to the FAD site. The Microbody targeting signal signature appears at 510-512 (PRL).

It belongs to the flavin monoamine oxidase family. Monomer. FAD serves as cofactor.

The protein localises to the peroxisome. It is found in the cytoplasm. The catalysed reaction is N(1)-acetylspermine + O2 + H2O = 3-acetamidopropanal + spermidine + H2O2. The enzyme catalyses N(1)-acetylspermidine + O2 + H2O = 3-acetamidopropanal + putrescine + H2O2. It carries out the reaction N(1),N(12)-diacetylspermine + O2 + H2O = 3-acetamidopropanal + N(1)-acetylspermidine + H2O2. It functions in the pathway amine and polyamine metabolism; spermine metabolism. Its function is as follows. Flavoenzyme which catalyzes the oxidation of N(1)-acetylspermine to spermidine and is thus involved in the polyamine back-conversion. Can also oxidize N(1)-acetylspermidine to putrescine. Substrate specificity: N(1)-acetylspermine = N(1)-acetylspermidine &gt; N(1),N(12)-diacylspermine &gt;&gt; spermine. Does not oxidize spermidine. Plays an important role in the regulation of polyamine intracellular concentration. This is Peroxisomal N(1)-acetyl-spermine/spermidine oxidase (PAOX) from Bos taurus (Bovine).